The following is a 501-amino-acid chain: Glycerol kinase (501 aa).

Residue T17 coordinates ADP. ATP is bound by residues T17, T18, and S19. T17 lines the sn-glycerol 3-phosphate pocket. R21 provides a ligand contact to ADP. Positions 87, 88, 139, and 243 each coordinate sn-glycerol 3-phosphate. Glycerol-binding residues include R87, E88, Y139, D243, and Q244. Residues T265 and G308 each coordinate ADP. The ATP site is built by T265, G308, Q312, and G409. Residues G409 and N413 each contribute to the ADP site.

It belongs to the FGGY kinase family.

It carries out the reaction glycerol + ATP = sn-glycerol 3-phosphate + ADP + H(+). Its pathway is polyol metabolism; glycerol degradation via glycerol kinase pathway; sn-glycerol 3-phosphate from glycerol: step 1/1. Inhibited by fructose 1,6-bisphosphate (FBP). Functionally, key enzyme in the regulation of glycerol uptake and metabolism. Catalyzes the phosphorylation of glycerol to yield sn-glycerol 3-phosphate. The chain is Glycerol kinase from Pseudomonas syringae pv. syringae (strain B728a).